Consider the following 338-residue polypeptide: Holliday junction branch migration complex subunit RuvB (338 aa).

The large ATPase domain (RuvB-L) stretch occupies residues 1-181; it reads MTTRTISPEK…FGVISRLEFY (181 aa). ATP is bound by residues leucine 20, arginine 21, glycine 62, lysine 65, threonine 66, threonine 67, 128–130, arginine 171, tyrosine 181, and arginine 218; that span reads EDF. Threonine 66 contributes to the Mg(2+) binding site. The segment at 182-252 is small ATPAse domain (RuvB-S); it reads TDAELSTIVT…VVDESLKLLE (71 aa). A head domain (RuvB-H) region spans residues 255 to 338; sequence EKGFDQMDRT…APAPGQGALF (84 aa). Residues arginine 291, arginine 310, and arginine 315 each coordinate DNA.

It belongs to the RuvB family. In terms of assembly, homohexamer. Forms an RuvA(8)-RuvB(12)-Holliday junction (HJ) complex. HJ DNA is sandwiched between 2 RuvA tetramers; dsDNA enters through RuvA and exits via RuvB. An RuvB hexamer assembles on each DNA strand where it exits the tetramer. Each RuvB hexamer is contacted by two RuvA subunits (via domain III) on 2 adjacent RuvB subunits; this complex drives branch migration. In the full resolvosome a probable DNA-RuvA(4)-RuvB(12)-RuvC(2) complex forms which resolves the HJ.

The protein localises to the cytoplasm. The enzyme catalyses ATP + H2O = ADP + phosphate + H(+). Functionally, the RuvA-RuvB-RuvC complex processes Holliday junction (HJ) DNA during genetic recombination and DNA repair, while the RuvA-RuvB complex plays an important role in the rescue of blocked DNA replication forks via replication fork reversal (RFR). RuvA specifically binds to HJ cruciform DNA, conferring on it an open structure. The RuvB hexamer acts as an ATP-dependent pump, pulling dsDNA into and through the RuvAB complex. RuvB forms 2 homohexamers on either side of HJ DNA bound by 1 or 2 RuvA tetramers; 4 subunits per hexamer contact DNA at a time. Coordinated motions by a converter formed by DNA-disengaged RuvB subunits stimulates ATP hydrolysis and nucleotide exchange. Immobilization of the converter enables RuvB to convert the ATP-contained energy into a lever motion, pulling 2 nucleotides of DNA out of the RuvA tetramer per ATP hydrolyzed, thus driving DNA branch migration. The RuvB motors rotate together with the DNA substrate, which together with the progressing nucleotide cycle form the mechanistic basis for DNA recombination by continuous HJ branch migration. Branch migration allows RuvC to scan DNA until it finds its consensus sequence, where it cleaves and resolves cruciform DNA. The chain is Holliday junction branch migration complex subunit RuvB from Geobacter sulfurreducens (strain ATCC 51573 / DSM 12127 / PCA).